Consider the following 299-residue polypeptide: ATP phosphoribosyltransferase (299 aa).

Belongs to the ATP phosphoribosyltransferase family. Long subfamily. Equilibrium between an active dimeric form, an inactive hexameric form and higher aggregates. Interconversion between the various forms is largely reversible and is influenced by the natural substrates and inhibitors of the enzyme. Mg(2+) is required as a cofactor.

It is found in the cytoplasm. It catalyses the reaction 1-(5-phospho-beta-D-ribosyl)-ATP + diphosphate = 5-phospho-alpha-D-ribose 1-diphosphate + ATP. The protein operates within amino-acid biosynthesis; L-histidine biosynthesis; L-histidine from 5-phospho-alpha-D-ribose 1-diphosphate: step 1/9. Feedback inhibited by histidine. Functionally, catalyzes the condensation of ATP and 5-phosphoribose 1-diphosphate to form N'-(5'-phosphoribosyl)-ATP (PR-ATP). Has a crucial role in the pathway because the rate of histidine biosynthesis seems to be controlled primarily by regulation of HisG enzymatic activity. The chain is ATP phosphoribosyltransferase from Escherichia coli O81 (strain ED1a).